The sequence spans 224 residues: Late embryogenesis abundant protein, group 3 (224 aa).

Disordered stretches follow at residues 1–169 (MASN…KDKT) and 193–224 (NTLGMGGDNTITTKDNTTGATTKDTTTTTRNH). The segment covering 13 to 23 (GETKARNEEKT) has biased composition (basic and acidic residues). 5 consecutive repeat copies span residues 26-36 (VMGATKDKAGQ), 37-47 (TTEATKQKAGE), 48-58 (TTEATKQKAAE), 59-69 (TTEAAKQKASE), and 70-80 (TAEATKQKAAE). Residues 26 to 153 (VMGATKDKAG…TEAAKQKASE (128 aa)) form a 12 X 11 AA tandem repeats region. Composition is skewed to basic and acidic residues over residues 41–85 (TKQK…KDKT), 92–109 (AKEKTYETAQSAKERAAQ), and 120–151 (EKTEAAKQKAAETTEAARQKAAEATEAAKQKA). The stretch at 81–87 (AKDKTAQ) is one 6; truncated repeat. Repeat copies occupy residues 88–98 (TAQAAKEKTYE), 99–109 (TAQSAKERAAQ), 121–131 (KTEAAKQKAAE), 132–142 (TTEAARQKAAE), and 143–153 (ATEAAKQKASE). Residues 200 to 224 (DNTITTKDNTTGATTKDTTTTTRNH) are compositionally biased toward low complexity.

Belongs to the LEA type 4 family.

The polypeptide is Late embryogenesis abundant protein, group 3 (Triticum aestivum (Wheat)).